Consider the following 366-residue polypeptide: MSEAPLILLAAGGTGGHLFPAEALGVVLMKRGLRVRLVTDSRAMRYSGLFSADMIDVVPSETVRGRTPWALARTGVMLGAGTALAIGLMMRLRPAAVIGFGGYPTLPPLFAARALRIPTLIHDANAVMGRANRLLSRRVSAIATSLPGVLDRDPELAAKTTTTGTPMRPAILAAAAVPFAPLDAEEPLRLLVVGGSQGARVMADIVPGALDELDPALLRRLALTQQVRDEDMSRVRAVYDRLKIACELAPFFSDLPARLAASQLVVSRSGAGTVAELGAIGRPSILVPLPGALDQDQFANAGVLADAGGAIRIVQGDFTSERLAAEITALAADPQKLTAMATAARTVGRLDAADRLADLVMQVARI.

Residues 14 to 16, asparagine 125, arginine 168, serine 196, and glutamine 297 each bind UDP-N-acetyl-alpha-D-glucosamine; that span reads TGG.

This sequence belongs to the glycosyltransferase 28 family. MurG subfamily.

The protein resides in the cell inner membrane. It carries out the reaction di-trans,octa-cis-undecaprenyl diphospho-N-acetyl-alpha-D-muramoyl-L-alanyl-D-glutamyl-meso-2,6-diaminopimeloyl-D-alanyl-D-alanine + UDP-N-acetyl-alpha-D-glucosamine = di-trans,octa-cis-undecaprenyl diphospho-[N-acetyl-alpha-D-glucosaminyl-(1-&gt;4)]-N-acetyl-alpha-D-muramoyl-L-alanyl-D-glutamyl-meso-2,6-diaminopimeloyl-D-alanyl-D-alanine + UDP + H(+). The protein operates within cell wall biogenesis; peptidoglycan biosynthesis. Cell wall formation. Catalyzes the transfer of a GlcNAc subunit on undecaprenyl-pyrophosphoryl-MurNAc-pentapeptide (lipid intermediate I) to form undecaprenyl-pyrophosphoryl-MurNAc-(pentapeptide)GlcNAc (lipid intermediate II). In Rhodopseudomonas palustris (strain BisB5), this protein is UDP-N-acetylglucosamine--N-acetylmuramyl-(pentapeptide) pyrophosphoryl-undecaprenol N-acetylglucosamine transferase.